We begin with the raw amino-acid sequence, 423 residues long: MVFQGLSPTFVGSLSDTIGRRPVYIFCFVTYIAANVGLALSNSFIALLLLRCLQSTGSSSTVNLAYGVTADVVTSAERGRYIGLASVGPIIGPSLGPVLGGVITQYLGWRYIFVILAAAALIFLFLLIIFFPETCRNLVGNGSIPPKSLWNRSLVSLFKKGSKLEDHASGRNLPNAGSKKSNPRNTNPLKALNVLFEYPTSPVIIFNGLSYAIYYAITSSLSYSFHDNYYFDDIHVGLSYIPIGVGTIIAALGNGFVVDWNYRRLANKAGIDIDQGRHMDYETGKRLGFSIEKARLQIAVPAVVVACISMLGYAWTMSLRLPPIIPLLCLFVFGWGGTAAYSCMNVLIVDINYSSAASATAANNLVRCLLGAGGAAVIMPLINVLGMGWTFTAIAGLWVLLSPLVLFLLFRREEVYDEISDSE.

3 helical membrane-spanning segments follow: residues 25–45 (IFCF…NSFI), 82–102 (IGLA…LGGV), and 111–131 (YIFV…IIFF). N-linked (GlcNAc...) asparagine glycans are attached at residues Asn141 and Asn151. The segment at 166-185 (DHASGRNLPNAGSKKSNPRN) is disordered. Helical transmembrane passes span 203 to 223 (VIIF…SLSY), 238 to 258 (LSYI…GFVV), 298 to 318 (IAVP…WTMS), and 321 to 341 (LPPI…TAAY). Asn352 carries an N-linked (GlcNAc...) asparagine glycan. A run of 2 helical transmembrane segments spans residues 369 to 389 (LLGA…GMGW) and 390 to 410 (TFTA…FLLF).

Belongs to the major facilitator superfamily. CAR1 family.

Its subcellular location is the membrane. MFS-type transporter; part of the gene cluster that mediates the biosynthesis of the antihypercholesterolemic agents phomoidrides which are dimeric anhydrides. This chain is MFS-type transporter phiL, found in Fungal sp. (strain ATCC 74256).